The following is a 98-amino-acid chain: NADH-ubiquinone oxidoreductase chain 4L (98 aa).

The next 3 helical transmembrane spans lie at 1-21 (MPYIYMNITLAFVISLIGTLM), 29-49 (SLLCLEGMLLSLFTLNALLSL), and 61-81 (LILLVFAACEAAVGLALLVMI).

It belongs to the complex I subunit 4L family. As to quaternary structure, core subunit of respiratory chain NADH dehydrogenase (Complex I) which is composed of 45 different subunits.

The protein resides in the mitochondrion inner membrane. The enzyme catalyses a ubiquinone + NADH + 5 H(+)(in) = a ubiquinol + NAD(+) + 4 H(+)(out). In terms of biological role, core subunit of the mitochondrial membrane respiratory chain NADH dehydrogenase (Complex I) which catalyzes electron transfer from NADH through the respiratory chain, using ubiquinone as an electron acceptor. Part of the enzyme membrane arm which is embedded in the lipid bilayer and involved in proton translocation. This is NADH-ubiquinone oxidoreductase chain 4L (MT-ND4L) from Elephas maximus (Indian elephant).